The chain runs to 109 residues: Spermidine export protein MdtI (109 aa).

Helical transmembrane passes span 6–26 (FYPIAFLILAVMLEIVANILL), 36–56 (WLGILSLLSVLGAFSALAQAV), 64–84 (AYALWGGFGIAATVAAGWILF), and 88–108 (LNYKGWIGLILLLAGMVMIKL).

Belongs to the drug/metabolite transporter (DMT) superfamily. Small multidrug resistance (SMR) (TC 2.A.7.1) family. MdtI subfamily. As to quaternary structure, forms a complex with MdtJ.

Its subcellular location is the cell inner membrane. Its function is as follows. Catalyzes the excretion of spermidine. The polypeptide is Spermidine export protein MdtI (Yersinia pseudotuberculosis serotype O:1b (strain IP 31758)).